Reading from the N-terminus, the 1241-residue chain is DNA-directed RNA polymerase subunit beta (1241 aa).

Positions 1186 to 1210 are disordered; that stretch reads EDEIVPTAEKRSSNQDEEALELVDN. Acidic residues predominate over residues 1200-1210; that stretch reads QDEEALELVDN.

This sequence belongs to the RNA polymerase beta chain family. In terms of assembly, the RNAP catalytic core consists of 2 alpha, 1 beta, 1 beta' and 1 omega subunit. When a sigma factor is associated with the core the holoenzyme is formed, which can initiate transcription.

It catalyses the reaction RNA(n) + a ribonucleoside 5'-triphosphate = RNA(n+1) + diphosphate. Functionally, DNA-dependent RNA polymerase catalyzes the transcription of DNA into RNA using the four ribonucleoside triphosphates as substrates. The polypeptide is DNA-directed RNA polymerase subunit beta (Clostridium novyi (strain NT)).